Here is a 123-residue protein sequence, read N- to C-terminus: MEGLVVAAGGDVSLHNFSARLWEQLVHFHVMRLTDSLFLWVGATPHLRNLAVAMCSRYDSIPVSTSLLGDTSDTTSTGLAQRLARKTNKQVFVSYNLQNTDSNFALLVENRIKEEMEAFPEKF.

The protein belongs to the PSMG4 family. Interacts with PSMG3. Associates with alpha subunits of the 20S proteasome.

Its function is as follows. Chaperone protein which promotes assembly of the 20S proteasome. This is Proteasome assembly chaperone 4 from Homo sapiens (Human).